We begin with the raw amino-acid sequence, 487 residues long: METVQLRNPPRRQLKKLDEDSLTKQPEEVFDVLEKLGEGSYGSVYKAIHKETGQIVAIKQVPVESDLQEIIKEISIMQQCDSPHVVKYYGSYFKNTDLWIVMEYCGAGSVSDIIRLRNKTLTEDEIATILQSTLKGLEYLHFMRKIHRDIKAGNILLNTEGHAKLADFGVAGQLTDTMAKRNTVIGTPFWMAPEVIQEIGYNCVADIWSLGITAIEMAEGKPPYADIHPMRAIFMIPTNPPPTFRKPELWSDNFTDFVRQCLVKSPDQRATATQLLQHPFVKSAKGVSILRDLINEAMDVKLKRQEAQQREVDQDDEENSEEDELDSGTMVRAVGDEMGTVRVASTMSDGANTMIEHDDTLPSQLGTMVINADDEEEEGTMKRRDETMQPAKPSFLEYFEQKEKENQINSFGKSVPGPLKNSSDWKVPQDGDYEFLKSWTVEDLQKRLLALDPMMEQEIEEIRQKYQSKRQPILDAIEAKKRRQQNF.

Methionine 1 is modified (N-acetylmethionine). Phosphothreonine is present on threonine 3. In terms of domain architecture, Protein kinase spans 30–281 (FDVLEKLGEG…ATQLLQHPFV (252 aa)). Residues 36 to 44 (LGEGSYGSV) and lysine 59 contribute to the ATP site. Aspartate 149 functions as the Proton acceptor in the catalytic mechanism. Threonine 183 is subject to Phosphothreonine; by autocatalysis. Serine 265 carries the phosphoserine modification. A coiled-coil region spans residues 290–310 (LRDLINEAMDVKLKRQEAQQR). Residues 305–337 (QEAQQREVDQDDEENSEEDELDSGTMVRAVGDE) form a disordered region. A compositionally biased stretch (acidic residues) spans 313 to 326 (DQDDEENSEEDELD). Serine 320 carries the phosphoserine modification. Phosphothreonine is present on residues threonine 340 and threonine 367. Threonine 387 is subject to Phosphothreonine; by PKB/AKT1. Phosphoserine is present on residues serine 410 and serine 414. Position 433 is a phosphotyrosine (tyrosine 433). One can recognise an SARAH domain in the interval 433–480 (YEFLKSWTVEDLQKRLLALDPMMEQEIEEIRQKYQSKRQPILDAIEAK).

The protein belongs to the protein kinase superfamily. STE Ser/Thr protein kinase family. STE20 subfamily. Homodimer; mediated via the coiled-coil region. Interacts with NORE1, which inhibits autoactivation. Interacts with and stabilizes SAV1. Interacts with RASSF1. Interacts with FOXO3. Interacts with RASSF2 (via SARAH domain). Interacts with AR, PKB/AKT1, TNNI3 and SIRT1. Interacts with DLG5 (via PDZ domain 3). Interacts with MARK3 and SCRIB in the presence of DLG5. It depends on Mg(2+) as a cofactor. In terms of processing, autophosphorylated on serine and threonine residues. Phosphorylation at Thr-387 by PKB/AKT1, leads to inhibition of its: kinase activity, nuclear translocation and autophosphorylation at Thr-183. It also diminishes its cleavage by caspases and its ability to phosphorylate FOXO3. Post-translationally, proteolytically cleaved by caspase-3 during apoptosis at Asp-326 and Asp-349 resulting in a 37 kDa or a 39 kDa subunit respectively. The 39 kDa subunit is further cleaved into the 37 kDa form. Proteolytic cleavage results in kinase activation and nuclear translocation of the truncated form (MST1/N). It is less likely that cleavage at Asp-349 is a prerequisite for activation as this site is not conserved in the murine ortholog.

Its subcellular location is the cytoplasm. It is found in the nucleus. It carries out the reaction L-seryl-[protein] + ATP = O-phospho-L-seryl-[protein] + ADP + H(+). The enzyme catalyses L-threonyl-[protein] + ATP = O-phospho-L-threonyl-[protein] + ADP + H(+). Inhibited by the C-terminal non-catalytic region. Activated by caspase-cleavage. Full activation also requires homodimerization and autophosphorylation of Thr-183. Activated by RASSF1 which acts by preventing its dephosphorylation. In terms of biological role, stress-activated, pro-apoptotic kinase which, following caspase-cleavage, enters the nucleus and induces chromatin condensation followed by internucleosomal DNA fragmentation. Key component of the Hippo signaling pathway which plays a pivotal role in organ size control and tumor suppression by restricting proliferation and promoting apoptosis. The core of this pathway is composed of a kinase cascade wherein STK3/MST2 and STK4/MST1, in complex with its regulatory protein SAV1, phosphorylates and activates LATS1/2 in complex with its regulatory protein MOB1, which in turn phosphorylates and inactivates YAP1 oncoprotein and WWTR1/TAZ. Phosphorylation of YAP1 by LATS2 inhibits its translocation into the nucleus to regulate cellular genes important for cell proliferation, cell death, and cell migration. STK3/MST2 and STK4/MST1 are required to repress proliferation of mature hepatocytes, to prevent activation of facultative adult liver stem cells (oval cells), and to inhibit tumor formation. Phosphorylates 'Ser-14' of histone H2B (H2BS14ph) during apoptosis. Phosphorylates FOXO3 upon oxidative stress, which results in its nuclear translocation and cell death initiation. Phosphorylates MOBKL1A, MOBKL1B and RASSF2. Phosphorylates TNNI3 (cardiac Tn-I) and alters its binding affinity to TNNC1 (cardiac Tn-C) and TNNT2 (cardiac Tn-T). Phosphorylates FOXO1 on 'Ser-212' and regulates its activation and stimulates transcription of PMAIP1 in a FOXO1-dependent manner. Phosphorylates SIRT1 and inhibits SIRT1-mediated p53/TP53 deacetylation, thereby promoting p53/TP53 dependent transcription and apoptosis upon DNA damage. Acts as an inhibitor of PKB/AKT1. Phosphorylates AR on 'Ser-650' and suppresses its activity by intersecting with PKB/AKT1 signaling and antagonizing formation of AR-chromatin complexes. This Otolemur garnettii (Small-eared galago) protein is Serine/threonine-protein kinase 4 (STK4).